Consider the following 187-residue polypeptide: Hypoxanthine/guanine phosphoribosyltransferase (187 aa).

Belongs to the purine/pyrimidine phosphoribosyltransferase family. Archaeal HPRT subfamily. As to quaternary structure, homodimer.

It localises to the cytoplasm. The catalysed reaction is IMP + diphosphate = hypoxanthine + 5-phospho-alpha-D-ribose 1-diphosphate. The enzyme catalyses GMP + diphosphate = guanine + 5-phospho-alpha-D-ribose 1-diphosphate. It participates in purine metabolism; IMP biosynthesis via salvage pathway; IMP from hypoxanthine: step 1/1. Functionally, catalyzes a salvage reaction resulting in the formation of IMP that is energically less costly than de novo synthesis. This chain is Hypoxanthine/guanine phosphoribosyltransferase, found in Methanocorpusculum labreanum (strain ATCC 43576 / DSM 4855 / Z).